The chain runs to 110 residues: Putative caspase recruitment domain-containing protein 17P (110 aa).

Residues 1–91 (MADKVLKEKR…HLAGTLGLSA (91 aa)) form the CARD domain.

In terms of assembly, interacts with pro-CASP1. In terms of tissue distribution, ubiquitous.

It is found in the cytoplasm. Regulator of procaspase-1/CASP1 activation implicated in the regulation of the proteolytic maturation of pro-IL-1beta/IL1B and its release during inflammation. Inhibits the release of IL1B in response to LPS in monocytes. However, unlike CASP1, do not induce NF-kappa-B activation. The sequence is that of Putative caspase recruitment domain-containing protein 17P (CARD17P) from Homo sapiens (Human).